A 431-amino-acid chain; its full sequence is Enolase (431 aa).

A (2R)-2-phosphoglycerate-binding site is contributed by Gln168. Residue Glu210 is the Proton donor of the active site. Residues Asp247, Glu291, and Asp318 each contribute to the Mg(2+) site. (2R)-2-phosphoglycerate contacts are provided by Lys343, Arg372, Ser373, and Lys394. Residue Lys343 is the Proton acceptor of the active site.

Belongs to the enolase family. As to quaternary structure, component of the RNA degradosome, a multiprotein complex involved in RNA processing and mRNA degradation. Mg(2+) serves as cofactor.

The protein resides in the cytoplasm. It localises to the secreted. It is found in the cell surface. The catalysed reaction is (2R)-2-phosphoglycerate = phosphoenolpyruvate + H2O. It participates in carbohydrate degradation; glycolysis; pyruvate from D-glyceraldehyde 3-phosphate: step 4/5. Functionally, catalyzes the reversible conversion of 2-phosphoglycerate (2-PG) into phosphoenolpyruvate (PEP). It is essential for the degradation of carbohydrates via glycolysis. The protein is Enolase of Acinetobacter baumannii (strain AYE).